The sequence spans 818 residues: Phosphoenolpyruvate synthase (818 aa).

His-442 (tele-phosphohistidine intermediate) is an active-site residue. The substrate site is built by Arg-532, Arg-601, Glu-703, Gly-724, Ser-725, Asn-726, and Asp-727. Position 703 (Glu-703) interacts with Mg(2+). Asp-727 contributes to the Mg(2+) binding site. Cys-774 functions as the Proton donor in the catalytic mechanism.

Belongs to the PEP-utilizing enzyme family. Requires Mg(2+) as cofactor.

It carries out the reaction pyruvate + ATP + H2O = phosphoenolpyruvate + AMP + phosphate + 2 H(+). Its pathway is carbohydrate biosynthesis; gluconeogenesis. Functionally, catalyzes the phosphorylation of pyruvate to phosphoenolpyruvate. This Synechocystis sp. (strain ATCC 27184 / PCC 6803 / Kazusa) protein is Phosphoenolpyruvate synthase (ppsA).